We begin with the raw amino-acid sequence, 856 residues long: DNA mismatch repair protein MutS (856 aa).

Residue 615 to 622 (GPNMGGKS) participates in ATP binding. The span at 798 to 807 (ETTGHQQAIK) shows a compositional bias: polar residues. Residues 798-817 (ETTGHQQAIKNPSKAPREEQ) are disordered.

This sequence belongs to the DNA mismatch repair MutS family.

This protein is involved in the repair of mismatches in DNA. It is possible that it carries out the mismatch recognition step. This protein has a weak ATPase activity. The sequence is that of DNA mismatch repair protein MutS from Photobacterium profundum (strain SS9).